A 227-amino-acid chain; its full sequence is 2-phospho-L-lactate guanylyltransferase (227 aa).

Belongs to the CofC family. Homodimer.

It carries out the reaction (2S)-2-phospholactate + GTP + H(+) = (2S)-lactyl-2-diphospho-5'-guanosine + diphosphate. The protein operates within cofactor biosynthesis; coenzyme F420 biosynthesis. Guanylyltransferase that catalyzes the activation of (2S)-2-phospholactate (2-PL) as (2S)-lactyl-2-diphospho-5'-guanosine, via the condensation of 2-PL with GTP. It is involved in the biosynthesis of coenzyme F420, a hydride carrier cofactor. The polypeptide is 2-phospho-L-lactate guanylyltransferase (Methanocaldococcus sp. (strain FS406-22)).